Consider the following 269-residue polypeptide: Tryptophan synthase alpha chain (269 aa).

Active-site proton acceptor residues include Glu-49 and Asp-60.

Belongs to the TrpA family. Tetramer of two alpha and two beta chains.

It catalyses the reaction (1S,2R)-1-C-(indol-3-yl)glycerol 3-phosphate + L-serine = D-glyceraldehyde 3-phosphate + L-tryptophan + H2O. The protein operates within amino-acid biosynthesis; L-tryptophan biosynthesis; L-tryptophan from chorismate: step 5/5. The alpha subunit is responsible for the aldol cleavage of indoleglycerol phosphate to indole and glyceraldehyde 3-phosphate. This is Tryptophan synthase alpha chain from Proteus mirabilis (strain HI4320).